A 128-amino-acid polypeptide reads, in one-letter code: Small ribosomal subunit protein uS12 (128 aa).

Position 89 is a 3-methylthioaspartic acid (aspartate 89).

It belongs to the universal ribosomal protein uS12 family. Part of the 30S ribosomal subunit. Contacts proteins S8 and S17. May interact with IF1 in the 30S initiation complex.

With S4 and S5 plays an important role in translational accuracy. Its function is as follows. Interacts with and stabilizes bases of the 16S rRNA that are involved in tRNA selection in the A site and with the mRNA backbone. Located at the interface of the 30S and 50S subunits, it traverses the body of the 30S subunit contacting proteins on the other side and probably holding the rRNA structure together. The combined cluster of proteins S8, S12 and S17 appears to hold together the shoulder and platform of the 30S subunit. In Campylobacter jejuni subsp. doylei (strain ATCC BAA-1458 / RM4099 / 269.97), this protein is Small ribosomal subunit protein uS12.